Consider the following 142-residue polypeptide: Large ribosomal subunit protein uL13 (142 aa).

Belongs to the universal ribosomal protein uL13 family. Part of the 50S ribosomal subunit.

This protein is one of the early assembly proteins of the 50S ribosomal subunit, although it is not seen to bind rRNA by itself. It is important during the early stages of 50S assembly. The protein is Large ribosomal subunit protein uL13 of Shewanella amazonensis (strain ATCC BAA-1098 / SB2B).